A 485-amino-acid polypeptide reads, in one-letter code: Adenosylhomocysteinase (485 aa).

3 residues coordinate substrate: threonine 64, aspartate 139, and glutamate 205. 206–208 (TTT) provides a ligand contact to NAD(+). 2 residues coordinate substrate: lysine 235 and aspartate 239. NAD(+)-binding positions include asparagine 240, 269-274 (GYGDVG), glutamate 292, asparagine 327, 348-350 (IGH), and asparagine 397.

This sequence belongs to the adenosylhomocysteinase family. NAD(+) serves as cofactor.

The enzyme catalyses S-adenosyl-L-homocysteine + H2O = L-homocysteine + adenosine. Its pathway is amino-acid biosynthesis; L-homocysteine biosynthesis; L-homocysteine from S-adenosyl-L-homocysteine: step 1/1. Its function is as follows. Adenosylhomocysteine is a competitive inhibitor of S-adenosyl-L-methionine-dependent methyl transferase reactions; therefore adenosylhomocysteinase may play a key role in the control of methylations via regulation of the intracellular concentration of adenosylhomocysteine. This Medicago sativa (Alfalfa) protein is Adenosylhomocysteinase (SAHH).